Reading from the N-terminus, the 302-residue chain is Deoxyhypusine hydroxylase (302 aa).

HEAT-like PBS-type repeat units lie at residues 23–49 (ERFR…AFDD), 54–80 (LKHE…VLKD), 87–113 (VRHE…YKQD), 175–201 (DRYR…GLKD), 206–232 (FRHE…NLED), and 239–265 (VRHE…YAED). Fe cation contacts are provided by His-56, Glu-57, His-89, and Glu-90. 4 residues coordinate Fe cation: His-208, Glu-209, His-241, and Glu-242.

Belongs to the deoxyhypusine hydroxylase family. Requires Fe(2+) as cofactor.

The protein resides in the endoplasmic reticulum membrane. It carries out the reaction [eIF5A protein]-deoxyhypusine + AH2 + O2 = [eIF5A protein]-hypusine + A + H2O. Its pathway is protein modification; eIF5A hypusination. Functionally, catalyzes the hydroxylation of the N(6)-(4-aminobutyl)-L-lysine intermediate to form hypusine, an essential post-translational modification only found in mature eIF-5A factor. Essential for organismal viability and plays a role in a wide number of important processes such as cell growth and proliferation, and regulates induction of autophagy and protein synthesis. Has a role in eIF-5A-mediated translational control. The chain is Deoxyhypusine hydroxylase from Drosophila melanogaster (Fruit fly).